A 697-amino-acid chain; its full sequence is Glycine--tRNA ligase beta subunit (697 aa).

Belongs to the class-II aminoacyl-tRNA synthetase family. In terms of assembly, tetramer of two alpha and two beta subunits.

The protein localises to the cytoplasm. The catalysed reaction is tRNA(Gly) + glycine + ATP = glycyl-tRNA(Gly) + AMP + diphosphate. The protein is Glycine--tRNA ligase beta subunit of Solidesulfovibrio magneticus (strain ATCC 700980 / DSM 13731 / RS-1) (Desulfovibrio magneticus).